Consider the following 251-residue polypeptide: Pantothenate synthetase (251 aa).

An ATP-binding site is contributed by 28 to 35 (MGALHTGH). The active-site Proton donor is His-35. Residue Gln-59 coordinates (R)-pantoate. Gln-59 contacts beta-alanine. 145-148 (GEKD) provides a ligand contact to ATP. Gln-151 contacts (R)-pantoate. Residues Val-174 and 182-185 (KSSR) each bind ATP.

This sequence belongs to the pantothenate synthetase family. Homodimer.

It is found in the cytoplasm. The enzyme catalyses (R)-pantoate + beta-alanine + ATP = (R)-pantothenate + AMP + diphosphate + H(+). It functions in the pathway cofactor biosynthesis; (R)-pantothenate biosynthesis; (R)-pantothenate from (R)-pantoate and beta-alanine: step 1/1. Catalyzes the condensation of pantoate with beta-alanine in an ATP-dependent reaction via a pantoyl-adenylate intermediate. The sequence is that of Pantothenate synthetase from Bdellovibrio bacteriovorus (strain ATCC 15356 / DSM 50701 / NCIMB 9529 / HD100).